The sequence spans 288 residues: Shikimate dehydrogenase (NADP(+)) (288 aa).

Shikimate contacts are provided by residues 15 to 17 (SKS) and Thr64. The active-site Proton acceptor is the Lys68. Glu83 lines the NADP(+) pocket. Shikimate is bound by residues Asn92 and Asp117. NADP(+) contacts are provided by residues 141–145 (GAGGA), 165–170 (NRTLSK), and Met232. Residue Tyr234 participates in shikimate binding. Residue Gly254 participates in NADP(+) binding.

The protein belongs to the shikimate dehydrogenase family. In terms of assembly, homodimer.

The enzyme catalyses shikimate + NADP(+) = 3-dehydroshikimate + NADPH + H(+). Its pathway is metabolic intermediate biosynthesis; chorismate biosynthesis; chorismate from D-erythrose 4-phosphate and phosphoenolpyruvate: step 4/7. Involved in the biosynthesis of the chorismate, which leads to the biosynthesis of aromatic amino acids. Catalyzes the reversible NADPH linked reduction of 3-dehydroshikimate (DHSA) to yield shikimate (SA). In Psychrobacter arcticus (strain DSM 17307 / VKM B-2377 / 273-4), this protein is Shikimate dehydrogenase (NADP(+)).